The chain runs to 480 residues: Molybdate-anion transporter (480 aa).

12 consecutive transmembrane segments (helical) span residues methionine 1 to leucine 21, alanine 44 to tyrosine 63, isoleucine 78 to tryptophan 98, phenylalanine 129 to phenylalanine 149, threonine 177 to leucine 197, leucine 199 to valine 219, valine 274 to leucine 294, serine 304 to phenylalanine 324, valine 339 to valine 359, phenylalanine 369 to leucine 389, serine 401 to leucine 421, and phenylalanine 441 to leucine 461.

It belongs to the major facilitator superfamily.

The protein resides in the cell membrane. Mediates high-affinity intracellular uptake of the rare oligo-element molybdenum. This chain is Molybdate-anion transporter (mfsd5), found in Takifugu rubripes (Japanese pufferfish).